The sequence spans 471 residues: ATP synthase subunit beta (471 aa).

156 to 163 (GGAGVGKT) serves as a coordination point for ATP.

It belongs to the ATPase alpha/beta chains family. As to quaternary structure, F-type ATPases have 2 components, CF(1) - the catalytic core - and CF(0) - the membrane proton channel. CF(1) has five subunits: alpha(3), beta(3), gamma(1), delta(1), epsilon(1). CF(0) has three main subunits: a(1), b(2) and c(9-12). The alpha and beta chains form an alternating ring which encloses part of the gamma chain. CF(1) is attached to CF(0) by a central stalk formed by the gamma and epsilon chains, while a peripheral stalk is formed by the delta and b chains.

Its subcellular location is the cell membrane. It carries out the reaction ATP + H2O + 4 H(+)(in) = ADP + phosphate + 5 H(+)(out). Produces ATP from ADP in the presence of a proton gradient across the membrane. The catalytic sites are hosted primarily by the beta subunits. This Macrococcus caseolyticus (strain JCSC5402) (Macrococcoides caseolyticum) protein is ATP synthase subunit beta.